Reading from the N-terminus, the 59-residue chain is Large ribosomal subunit protein bL32 (59 aa).

The segment at 1–22 is disordered; the sequence is MAVQQNKKSPSKRGMHRSHDFL.

Belongs to the bacterial ribosomal protein bL32 family.

The protein is Large ribosomal subunit protein bL32 of Thiobacillus denitrificans (strain ATCC 25259 / T1).